Here is a 599-residue protein sequence, read N- to C-terminus: Beta-(1--&gt;2)glucan export ATP-binding/permease protein NdvA (599 aa).

In terms of domain architecture, ABC transmembrane type-1 spans 21 to 301; that stretch reads TITMCVASVL…ISAFINQTVT (281 aa). 5 helical membrane-spanning segments follow: residues 22-42, 55-75, 156-176, 248-268, and 276-296; these read ITMCVASVLVALVTLAEPVLF, IFSPLLMWAALGGFNIMAAVF, MRMSLVLIVLGVIYVMIGQLV, MASTFSMVVVLVLGAYFVTKG, and IAFIGFAQLMIGRLDQISAFI. One can recognise an ABC transporter domain in the interval 335–569; the sequence is IVFDNVTYEF…GGRFSDLLRA (235 aa). Position 368–375 (368–375) interacts with ATP; sequence GPTGAGKT.

Belongs to the ABC transporter superfamily. Beta-(1--&gt;2)glucan exporter (TC 3.A.1.108.1) family. Homodimer.

The protein resides in the cell inner membrane. It catalyses the reaction [(1-&gt;2)-beta-D-glucosyl](n)(in) + ATP + H2O = [(1-&gt;2)-beta-D-glucosyl](n)(out) + ADP + phosphate + H(+). Functionally, involved in beta-(1--&gt;2)glucan export. Its export to the periplasmic space is required to exert its action as a virulence factor. Transmembrane domains (TMD) form a pore in the inner membrane and the ATP-binding domain (NBD) is responsible for energy generation. This is Beta-(1--&gt;2)glucan export ATP-binding/permease protein NdvA from Brucella abortus (strain 2308).